The primary structure comprises 527 residues: Cytochrome P450 monooxygenase aba2 (527 aa).

Residues 26-46 form a helical membrane-spanning segment; the sequence is TTVAVLVTVALIAQVLWKIFF. Asn-189, Asn-420, and Asn-448 each carry an N-linked (GlcNAc...) asparagine glycan. Cys-460 lines the heme pocket. N-linked (GlcNAc...) asparagine glycosylation is present at Asn-464.

This sequence belongs to the cytochrome P450 family. Requires heme as cofactor.

It is found in the membrane. It participates in hormone biosynthesis. Cytochrome P450 monooxygenase; part of the gene cluster that mediates the biosynthesis of abscisic acid (ABA), a phytohormone that acts antagonistically toward salicylic acid (SA), jasmonic acid (JA) and ethylene (ETH) signaling, to impede plant defense responses. The first step of the pathway catalyzes the reaction from farnesyl diphosphate to alpha-ionylideneethane performed by the alpha-ionylideneethane synthase aba3 via a three-step reaction mechanism involving 2 neutral intermediates, beta-farnesene and allofarnesene. The cytochrome P450 monooxygenase aba1 might then be involved in the conversion of alpha-ionylideneethane to alpha-ionylideneacetic acid. Alpha-ionylideneacetic acid is further converted to abscisic acid in 2 steps involving the cytochrome P450 monooxygenase aba2 and the short-chain dehydrogenase/reductase aba4, via the intermediates 1'-deoxy-ABA or 1',4'-trans-diol-ABA, depending on the order of action of these 2 enzymes. Aba2 is responsible for the hydroxylation of carbon atom C-1' and aba4 might be involved in the oxidation of the C-4' carbon atom. The protein is Cytochrome P450 monooxygenase aba2 (aba2) of Botryotinia fuckeliana (strain B05.10) (Noble rot fungus).